Consider the following 231-residue polypeptide: 26S proteasome non-ATPase regulatory subunit 10 (231 aa).

ANK repeat units follow at residues 3 to 36 (GCVS…ATRT), 37 to 69 (DQDS…VNEK), 70 to 102 (DDAG…VNAV), 103 to 135 (NQNG…PDAK), 136 to 168 (NHYD…TNIQ), 169 to 201 (DTEG…IYIE), and 202 to 226 (NKEE…IAES).

As to quaternary structure, part of transient complex containing PSMD10, PSMC4, PSMC5 and PAAF1 formed during the assembly of the 26S proteasome. Stays associated throughout the assembly of the PA700/19S RC and is released upon association with the 20S core. Interacts with PSMC4. Interacts with RB1. Interacts with CDK4. Interacts with MDM2. Interacts with RELA. Associates with a CDK4:CCND2 serine/threonine kinase complex. Interacts with ARHGDIA and increases the interaction between ARHGDIA and RHOA, hence promotes ARHGDIA inactivation of RHOA and ROCK.

The protein resides in the cytoplasm. It is found in the nucleus. In terms of biological role, acts as a chaperone during the assembly of the 26S proteasome, specifically of the PA700/19S regulatory complex (RC). In the initial step of the base subcomplex assembly is part of an intermediate PSMD10:PSMC4:PSMC5:PAAF1 module which probably assembles with a PSMD5:PSMC2:PSMC1:PSMD2 module. Independently of the proteasome, regulates EGF-induced AKT activation through inhibition of the RHOA/ROCK/PTEN pathway, leading to prolonged AKT activation. Plays an important role in RAS-induced tumorigenesis. Its function is as follows. Acts as an oncoprotein by being involved in negative regulation of tumor suppressors RB1 and p53/TP53. Overexpression is leading to phosphorylation of RB1 and proteasomal degradation of RB1. Regulates CDK4-mediated phosphorylation of RB1 by competing with CDKN2A for binding with CDK4. Facilitates binding of MDM2 to p53/TP53 and the mono- and polyubiquitination of p53/TP53 by MDM2 suggesting a function in targeting the TP53:MDM2 complex to the 26S proteasome. Involved in p53-independent apoptosis. Involved in regulation of NF-kappa-B by retaining it in the cytoplasm. Binds to the NF-kappa-B component RELA and accelerates its XPO1/CRM1-mediated nuclear export. This is 26S proteasome non-ATPase regulatory subunit 10 (Psmd10) from Rattus norvegicus (Rat).